The primary structure comprises 344 residues: UDP-glycosyltransferase 73C4 (344 aa).

Residues serine 145, 202 to 203, 220 to 228, and 242 to 245 contribute to the UDP-alpha-D-glucose site; these read WA, HCGWNSSLE, and FAEQ.

It belongs to the UDP-glycosyltransferase family. As to expression, expressed in flowers and fruits.

The protein localises to the cytoplasm. It is found in the nucleus. In terms of biological role, probable glucosyltransferase that cannot glycosylate abscisic acid (ABA) and auxin (IAA). This chain is UDP-glycosyltransferase 73C4, found in Solanum lycopersicum (Tomato).